The primary structure comprises 153 residues: Aspartate carbamoyltransferase regulatory chain (153 aa).

4 residues coordinate Zn(2+): cysteine 109, cysteine 114, cysteine 138, and cysteine 141.

The protein belongs to the PyrI family. In terms of assembly, contains catalytic and regulatory chains. The cofactor is Zn(2+).

Its function is as follows. Involved in allosteric regulation of aspartate carbamoyltransferase. This chain is Aspartate carbamoyltransferase regulatory chain, found in Cronobacter sakazakii (strain ATCC BAA-894) (Enterobacter sakazakii).